Reading from the N-terminus, the 283-residue chain is Pantothenate synthetase (283 aa).

Position 34–41 (34–41 (MGALHEGH)) interacts with ATP. Residue histidine 41 is the Proton donor of the active site. Residue glutamine 65 coordinates (R)-pantoate. Position 65 (glutamine 65) interacts with beta-alanine. 152–155 (GQKD) is a binding site for ATP. Residue glutamine 158 participates in (R)-pantoate binding. ATP is bound by residues valine 181 and 189 to 192 (MSSR).

It belongs to the pantothenate synthetase family. In terms of assembly, homodimer.

The protein localises to the cytoplasm. It catalyses the reaction (R)-pantoate + beta-alanine + ATP = (R)-pantothenate + AMP + diphosphate + H(+). It functions in the pathway cofactor biosynthesis; (R)-pantothenate biosynthesis; (R)-pantothenate from (R)-pantoate and beta-alanine: step 1/1. Its function is as follows. Catalyzes the condensation of pantoate with beta-alanine in an ATP-dependent reaction via a pantoyl-adenylate intermediate. The polypeptide is Pantothenate synthetase (Nitrobacter winogradskyi (strain ATCC 25391 / DSM 10237 / CIP 104748 / NCIMB 11846 / Nb-255)).